Consider the following 353-residue polypeptide: Rhodopsin (353 aa).

The Extracellular portion of the chain corresponds to 1–36 (MNGTEGPYFYIPMVNTTGIVRSPYEYPQYYLVNPAA). N-linked (GlcNAc...) asparagine glycosylation is found at Asn2 and Asn15. A helical transmembrane segment spans residues 37-61 (YAALGAYMFLLILLGFPINFLTLYV). The Cytoplasmic segment spans residues 62-73 (TIEHKKLRTPLN). A helical transmembrane segment spans residues 74 to 96 (YILLNLAVANLFMVFGGFTTTMY). Topologically, residues 97–110 (TSMHGYFVLGRLGC) are extracellular. An intrachain disulfide couples Cys110 to Cys187. The helical transmembrane segment at 111–133 (NLEGFFATLGGEIALWSLVVLAV) threads the bilayer. Positions 134–136 (ERW) match the 'Ionic lock' involved in activated form stabilization motif. The Cytoplasmic portion of the chain corresponds to 134–152 (ERWMVVCKPISNFRFGENH). Residues 153 to 173 (AIMGLAFTWVMASACAVPPLV) traverse the membrane as a helical segment. Residues 174-202 (GWSRYIPEGMQCSCGIDYYTRAEGFNNES) are Extracellular-facing. The N-linked (GlcNAc...) asparagine glycan is linked to Asn200. The chain crosses the membrane as a helical span at residues 203–224 (FVIYMFVCHFLIPLVVVFFCYG). The Cytoplasmic segment spans residues 225-252 (RLLCAVKEAAAAQQESETTQRAEREVSR). A helical transmembrane segment spans residues 253 to 274 (MVVIMVVAFLICWCPYAGVAWY). Topologically, residues 275 to 286 (IFTHQGSEFGPL) are extracellular. A helical membrane pass occupies residues 287 to 308 (FMTFPAFFAKSSSIYNPMIYIC). The residue at position 296 (Lys296) is an N6-(retinylidene)lysine. Over 309 to 353 (MNKQFRHCMITTLCCGKNPFEEEEGASTTSKTEASSVSSSSVSPA) the chain is Cytoplasmic. Residues Cys322 and Cys323 are each lipidated (S-palmitoyl cysteine). A disordered region spans residues 330–353 (EEEGASTTSKTEASSVSSSSVSPA). Residues 334–353 (ASTTSKTEASSVSSSSVSPA) show a composition bias toward low complexity.

Belongs to the G-protein coupled receptor 1 family. Opsin subfamily. Phosphorylated on some or all of the serine and threonine residues present in the C-terminal region. Post-translationally, contains one covalently linked retinal chromophore.

It localises to the membrane. Its subcellular location is the cell projection. It is found in the cilium. The protein localises to the photoreceptor outer segment. Functionally, photoreceptor required for image-forming vision at low light intensity. While most salt water fish species use retinal as chromophore, most freshwater fish use 3-dehydroretinal, or a mixture of retinal and 3-dehydroretinal. Light-induced isomerization of 11-cis to all-trans retinal triggers a conformational change that activates signaling via G-proteins. Subsequent receptor phosphorylation mediates displacement of the bound G-protein alpha subunit by arrestin and terminates signaling. The protein is Rhodopsin (rho) of Mugil cephalus (Flathead mullet).